Here is an 89-residue protein sequence, read N- to C-terminus: Large ribosomal subunit protein bL27 (89 aa).

Residues 1-22 form a disordered region; the sequence is MAHKKAGGSSRNGRDSESKRLG.

The protein belongs to the bacterial ribosomal protein bL27 family.

This chain is Large ribosomal subunit protein bL27, found in Rhizobium etli (strain CIAT 652).